The following is a 291-amino-acid chain: ATP synthase gamma chain (291 aa).

The protein belongs to the ATPase gamma chain family. In terms of assembly, F-type ATPases have 2 components, CF(1) - the catalytic core - and CF(0) - the membrane proton channel. CF(1) has five subunits: alpha(3), beta(3), gamma(1), delta(1), epsilon(1). CF(0) has three main subunits: a, b and c.

The protein localises to the cell membrane. Its function is as follows. Produces ATP from ADP in the presence of a proton gradient across the membrane. The gamma chain is believed to be important in regulating ATPase activity and the flow of protons through the CF(0) complex. This is ATP synthase gamma chain from Streptococcus equi subsp. zooepidemicus (strain MGCS10565).